The sequence spans 912 residues: uncharacterized protein (912 aa).

Basic and acidic residues-rich tracts occupy residues 20 to 32 (IERLREQGRAEPA) and 39 to 67 (HEYEHTQGSRSHSSKDGSRKDRMSSEDKT). Residues 20 to 91 (IERLREQGRA…KPTLPQPETD (72 aa)) are disordered. Over residues 68-77 (RHKKLKHRSR) the composition is skewed to basic residues.

This is an uncharacterized protein from Penicillium chrysogenum virus (isolate Caston/2003) (PcV).